The following is a 116-amino-acid chain: MTNKIIQQLEAEQMSKEIPTFAPGDTVVVQVKVKEGERSRLQAFEGVVIAKRNRGLNSAFTVRKISSGVGVERTFQTYSPQIDSLAVKRRGDVRKAKLYYLRDLSGKAARIKEKLS.

It belongs to the bacterial ribosomal protein bL19 family.

This protein is located at the 30S-50S ribosomal subunit interface and may play a role in the structure and function of the aminoacyl-tRNA binding site. In Pseudomonas putida (strain ATCC 700007 / DSM 6899 / JCM 31910 / BCRC 17059 / LMG 24140 / F1), this protein is Large ribosomal subunit protein bL19.